We begin with the raw amino-acid sequence, 327 residues long: Methionyl-tRNA formyltransferase (327 aa).

121-124 (SLLP) is a binding site for (6S)-5,6,7,8-tetrahydrofolate.

Belongs to the Fmt family.

It catalyses the reaction L-methionyl-tRNA(fMet) + (6R)-10-formyltetrahydrofolate = N-formyl-L-methionyl-tRNA(fMet) + (6S)-5,6,7,8-tetrahydrofolate + H(+). Its function is as follows. Attaches a formyl group to the free amino group of methionyl-tRNA(fMet). The formyl group appears to play a dual role in the initiator identity of N-formylmethionyl-tRNA by promoting its recognition by IF2 and preventing the misappropriation of this tRNA by the elongation apparatus. In Burkholderia ambifaria (strain MC40-6), this protein is Methionyl-tRNA formyltransferase.